A 259-amino-acid polypeptide reads, in one-letter code: 5'-nucleotidase SurE (259 aa).

4 residues coordinate a divalent metal cation: aspartate 8, aspartate 9, serine 39, and asparagine 98.

This sequence belongs to the SurE nucleotidase family. A divalent metal cation serves as cofactor.

The protein localises to the cytoplasm. It carries out the reaction a ribonucleoside 5'-phosphate + H2O = a ribonucleoside + phosphate. In terms of biological role, nucleotidase that shows phosphatase activity on nucleoside 5'-monophosphates. The protein is 5'-nucleotidase SurE of Fervidobacterium nodosum (strain ATCC 35602 / DSM 5306 / Rt17-B1).